The chain runs to 374 residues: Chaperone protein DnaJ (374 aa).

In terms of domain architecture, J spans 4 to 68; that stretch reads DYYDILGVSR…QMRGRYDQFG (65 aa). The CR-type zinc finger occupies 133 to 215; the sequence is GGEQQIRISH…CGGRGQNQVS (83 aa). 8 residues coordinate Zn(2+): cysteine 146, cysteine 149, cysteine 163, cysteine 166, cysteine 189, cysteine 192, cysteine 203, and cysteine 206. 4 CXXCXGXG motif repeats span residues 146–153, 163–170, 189–196, and 203–210; these read CKTCEGTG, CSTCQGSG, CPTCNGQG, and CDSCGGRG.

Belongs to the DnaJ family. Homodimer. Requires Zn(2+) as cofactor.

The protein resides in the cytoplasm. Participates actively in the response to hyperosmotic and heat shock by preventing the aggregation of stress-denatured proteins and by disaggregating proteins, also in an autonomous, DnaK-independent fashion. Unfolded proteins bind initially to DnaJ; upon interaction with the DnaJ-bound protein, DnaK hydrolyzes its bound ATP, resulting in the formation of a stable complex. GrpE releases ADP from DnaK; ATP binding to DnaK triggers the release of the substrate protein, thus completing the reaction cycle. Several rounds of ATP-dependent interactions between DnaJ, DnaK and GrpE are required for fully efficient folding. Also involved, together with DnaK and GrpE, in the DNA replication of plasmids through activation of initiation proteins. This Acaryochloris marina (strain MBIC 11017) protein is Chaperone protein DnaJ.